The following is a 170-amino-acid chain: Disulfide bond formation protein B (170 aa).

Residues 1–14 (MNDSTLALRRERRL) are Cytoplasmic-facing. The helical transmembrane segment at 15-31 (LMLLGWVCIALLAGALY) threads the bilayer. Residues 32–49 (LQYVKNEDPCPLCIIQRY) are Periplasmic-facing. Residues C41 and C44 are joined by a disulfide bond. Residues 50–64 (FFAAIGIFAFLAAGI) form a helical membrane-spanning segment. Topologically, residues 65–71 (RNWRVIW) are cytoplasmic. A helical membrane pass occupies residues 72–89 (VFELLIAIAAAGGVGTAA). Over 90–144 (RHLSIQMNPGFSCGFDTLQPIVDSLPPAQWFPGMFKVAGLCETVYPPIFGILLPG) the chain is Periplasmic. A disulfide bridge connects residues C102 and C130. A helical membrane pass occupies residues 145 to 163 (WALIGFAVILVAVASSLWR). Residues 164 to 170 (HRRKLAG) are Cytoplasmic-facing.

Belongs to the DsbB family.

The protein resides in the cell inner membrane. Its function is as follows. Required for disulfide bond formation in some periplasmic proteins. Acts by oxidizing the DsbA protein. The chain is Disulfide bond formation protein B from Burkholderia ambifaria (strain ATCC BAA-244 / DSM 16087 / CCUG 44356 / LMG 19182 / AMMD) (Burkholderia cepacia (strain AMMD)).